Here is a 209-residue protein sequence, read N- to C-terminus: Testis development-related protein (209 aa).

A disordered region spans residues 126–183; sequence KADEIEGWEPPHITVEESPTFPDDGLDDPNSWPGWEDETKGSTKYTNLTSSGNSSRWS. Over residues 167-183 the composition is skewed to polar residues; the sequence is STKYTNLTSSGNSSRWS.

The protein belongs to the TDRP family.

It is found in the nucleus. Its subcellular location is the cytoplasm. In Xenopus laevis (African clawed frog), this protein is Testis development-related protein (tdrp).